We begin with the raw amino-acid sequence, 246 residues long: 1-(5-phosphoribosyl)-5-[(5-phosphoribosylamino)methylideneamino] imidazole-4-carboxamide isomerase (246 aa).

The Proton acceptor role is filled by Asp-8. Asp-130 serves as the catalytic Proton donor.

The protein belongs to the HisA/HisF family.

It is found in the cytoplasm. The enzyme catalyses 1-(5-phospho-beta-D-ribosyl)-5-[(5-phospho-beta-D-ribosylamino)methylideneamino]imidazole-4-carboxamide = 5-[(5-phospho-1-deoxy-D-ribulos-1-ylimino)methylamino]-1-(5-phospho-beta-D-ribosyl)imidazole-4-carboxamide. Its pathway is amino-acid biosynthesis; L-histidine biosynthesis; L-histidine from 5-phospho-alpha-D-ribose 1-diphosphate: step 4/9. In Shigella sonnei (strain Ss046), this protein is 1-(5-phosphoribosyl)-5-[(5-phosphoribosylamino)methylideneamino] imidazole-4-carboxamide isomerase.